The primary structure comprises 536 residues: Probable 1,4-beta-D-glucan cellobiohydrolase B (536 aa).

The N-terminal stretch at 1–21 (MSSFQVYRAALLLSILATANA) is a signal peptide. The interval 22–458 (QQVGTYTTET…SNIKFGPIGS (437 aa)) is catalytic. Glu233 functions as the Nucleophile in the catalytic mechanism. The active-site Proton donor is Glu238. N-linked (GlcNAc...) asparagine glycans are attached at residues Asn351 and Asn414. A ser/Thr-rich linker region spans residues 459–500 (TYSSGSSSGSGSSSSSSSTTTKATSTTLKTTSTTSSGSSSTS). Residues 464 to 499 (SSSGSGSSSSSSSTTTKATSTTLKTTSTTSSGSSST) form a disordered region. One can recognise a CBM1 domain in the interval 500–536 (SAAQAYGQCGGQGWTGPTTCVSGYTCTYENAYYSQCL). Intrachain disulfides connect Cys508/Cys525 and Cys519/Cys535.

It belongs to the glycosyl hydrolase 7 (cellulase C) family.

The protein localises to the secreted. It carries out the reaction Hydrolysis of (1-&gt;4)-beta-D-glucosidic linkages in cellulose and cellotetraose, releasing cellobiose from the non-reducing ends of the chains.. In terms of biological role, the biological conversion of cellulose to glucose generally requires three types of hydrolytic enzymes: (1) Endoglucanases which cut internal beta-1,4-glucosidic bonds; (2) Exocellobiohydrolases that cut the disaccharide cellobiose from the non-reducing end of the cellulose polymer chain; (3) Beta-1,4-glucosidases which hydrolyze the cellobiose and other short cello-oligosaccharides to glucose. This is Probable 1,4-beta-D-glucan cellobiohydrolase B (cbhB) from Aspergillus niger (strain ATCC MYA-4892 / CBS 513.88 / FGSC A1513).